Consider the following 225-residue polypeptide: UPF0758 protein BCB4264_A4572 (225 aa).

The MPN domain occupies 103–225 (SIRSPEDCAK…FVSLKEKGHI (123 aa)). Zn(2+) is bound by residues His-174, His-176, and Asp-187. Positions 174–187 (HNHPSGDPTPSRED) match the JAMM motif motif.

It belongs to the UPF0758 family.

The polypeptide is UPF0758 protein BCB4264_A4572 (Bacillus cereus (strain B4264)).